We begin with the raw amino-acid sequence, 514 residues long: Na(+)/H(+) antiporter NhaB (514 aa).

11 helical membrane passes run 13–33 (FMGN…IINP), 34–54 (LIFF…EFIF), 96–116 (VILL…LLLF), 136–156 (CFAS…AVVI), 203–223 (LMMH…VGEP), 236–256 (FVTF…AGLA), 304–324 (ALIG…VGII), 349–369 (EEAL…AVII), 392–412 (LFYL…VGTV), 448–468 (ATPN…SPLI), and 479–499 (ALPY…FWLV).

This sequence belongs to the NhaB Na(+)/H(+) (TC 2.A.34) antiporter family.

The protein localises to the cell inner membrane. The enzyme catalyses 2 Na(+)(in) + 3 H(+)(out) = 2 Na(+)(out) + 3 H(+)(in). Na(+)/H(+) antiporter that extrudes sodium in exchange for external protons. The protein is Na(+)/H(+) antiporter NhaB of Proteus mirabilis (strain HI4320).